A 458-amino-acid chain; its full sequence is Phosphoglucosamine mutase (458 aa).

Catalysis depends on Ser106, which acts as the Phosphoserine intermediate. Ser106, Asp247, Asp249, and Asp251 together coordinate Mg(2+). A Phosphoserine modification is found at Ser106.

Belongs to the phosphohexose mutase family. The cofactor is Mg(2+). In terms of processing, activated by phosphorylation.

The enzyme catalyses alpha-D-glucosamine 1-phosphate = D-glucosamine 6-phosphate. In terms of biological role, catalyzes the conversion of glucosamine-6-phosphate to glucosamine-1-phosphate. The sequence is that of Phosphoglucosamine mutase from Chlamydia felis (strain Fe/C-56) (Chlamydophila felis).